The primary structure comprises 343 residues: Dehydrodolichyl diphosphate synthase complex subunit SRT1 (343 aa).

It belongs to the UPP synthase family. Forms an active dehydrodolichyl diphosphate synthase complex with NUS1. Requires Mg(2+) as cofactor.

The protein localises to the lipid droplet. The enzyme catalyses n isopentenyl diphosphate + (2E,6E)-farnesyl diphosphate = a di-trans,poly-cis-polyprenyl diphosphate + n diphosphate. Its pathway is protein modification; protein glycosylation. Functionally, with NUS1, forms the dehydrodolichyl diphosphate synthase (DDS) complex, an essential component of the dolichol monophosphate (Dol-P) biosynthetic machinery. Adds multiple copies of isopentenyl pyrophosphate (IPP) to farnesyl pyrophosphate (FPP) to produce dehydrodolichyl diphosphate (Dedol-PP), a precursor of dolichol which is utilized as a sugar carrier in protein glycosylation in the endoplasmic reticulum (ER). This chain is Dehydrodolichyl diphosphate synthase complex subunit SRT1, found in Saccharomyces cerevisiae (strain ATCC 204508 / S288c) (Baker's yeast).